We begin with the raw amino-acid sequence, 538 residues long: Cytochrome P450 monooxygenase flvC (538 aa).

Residues 17–37 traverse the membrane as a helical segment; the sequence is TVLIAGLLVYWVGSAIFLAVL. Residue Cys-478 participates in heme binding.

The protein belongs to the cytochrome P450 family. Requires heme as cofactor.

The protein localises to the membrane. It catalyses the reaction pre-flavunoidine + reduced [NADPH--hemoprotein reductase] + O2 = 10-hydroxy-pre-flavunoidine + oxidized [NADPH--hemoprotein reductase] + H2O + H(+). It participates in secondary metabolite biosynthesis; terpenoid biosynthesis. In terms of biological role, cytochrome P450 monooxygenase; part of the gene cluster that mediates the biosynthesis of flavunoidine, an alkaloidal terpenoid with a tetracyclic cage-like core connected to dimethylcadaverine via a C-N bond and acylated with 5,5-dimethyl-L-pipecolate. The tetracyclic core is synthesized by the terpene cyclase flvE and the cytochrome P450 monooxygenase flvD. The terpene cyclase flvE catalyzes the cyclization of farnesyl pyrophosphate (FPP) to form (1R,4R,5S)-(+)-acoradiene and the cytochrome P450 monooxygenase flvD is then responsible for oxidative conversion of (1R,4R,5S)-(+)-acoradiene into the tetracyclic cage present in the final product flavunoidine. In parallel, the N-methyltransferase flvH dimethylates L-lysine to give N,N-dimethyl-L-Lysin which is decarboxylated by flvG to afford dimethylcadaverine. The terpene cyclase-like protein flvF is the enzyme that attaches the dimethylcadaverine precusor at the C-7 of the tetracyclic cage to yield pre-flavunoidine. The cytochrome monooxygenase flvC hydroxylates the C-10 position of pre-flavunoidine whereas the NRPS flvI acylates the terpenoid core at the hydroxylated C-10 with dimethylpipecolate to yield final flavunoidine. The bifunctional enzyme flvA and the dehydrogenase flvB are responsible for the synthesis of the dimethylpipecolate precursor. The PLP-dependent lyase domain of flvA might use L-O-acetyl-homoserine and alpha-keto-isovalerate to form an intermediary ketone that can cyclize intramolecularly to yield an imine. The imine can be reduced by flvB to yield the 6-carboxylated pipecolate. The C-terminal alpha-KG-dependent oxygenase domain of flvA is then proposed to catalyze the decarboxylation to yield dimethylpipecolate. This Aspergillus flavus (strain ATCC 200026 / FGSC A1120 / IAM 13836 / NRRL 3357 / JCM 12722 / SRRC 167) protein is Cytochrome P450 monooxygenase flvC.